A 304-amino-acid chain; its full sequence is Homoserine dehydrogenase (304 aa).

Positions 8, 10, 11, 38, 39, and 73 each coordinate NADP(+). Residue Tyr8 participates in NADPH binding. NADPH is bound by residues Val11 and Arg38. An NAD(+)-binding site is contributed by Val11. The NADPH site is built by Ser73, Ser74, Thr100, and Lys102. An NAD(+)-binding site is contributed by Ser73. Residues Thr100 and Lys102 each contribute to the NADP(+) site. Residues Val129 and Thr133 each contribute to the Na(+) site. 2 residues coordinate NADP(+): Gly182 and Glu185. Residues Glu185 and Asp196 each contribute to the L-homoserine site. The active-site Proton donor is Lys200. An NADP(+)-binding site is contributed by Gly284. Gly284 contributes to the NADPH binding site. Gly284 serves as a coordination point for NAD(+).

Belongs to the homoserine dehydrogenase family. In terms of assembly, homodimer. It depends on a metal cation as a cofactor. In terms of processing, the enzyme is activated by reductive cleavage of the interchain disulfide bond between the two subunits.

The enzyme catalyses L-homoserine + NADP(+) = L-aspartate 4-semialdehyde + NADPH + H(+). It carries out the reaction L-homoserine + NAD(+) = L-aspartate 4-semialdehyde + NADH + H(+). Its pathway is amino-acid biosynthesis; L-methionine biosynthesis via de novo pathway; L-homoserine from L-aspartate: step 3/3. It functions in the pathway amino-acid biosynthesis; L-threonine biosynthesis; L-threonine from L-aspartate: step 3/5. With respect to regulation, inhibited by cysteine. Functionally, catalyzes the conversion of L-aspartate-beta-semialdehyde (L-Asa) to L-homoserine (L-Hse), the third step in the biosynthesis of threonine and methionine from aspartate. In Sulfurisphaera tokodaii (strain DSM 16993 / JCM 10545 / NBRC 100140 / 7) (Sulfolobus tokodaii), this protein is Homoserine dehydrogenase.